A 267-amino-acid polypeptide reads, in one-letter code: Formamidopyrimidine-DNA glycosylase (267 aa).

Residue P2 is the Schiff-base intermediate with DNA of the active site. The Proton donor role is filled by E3. K58 (proton donor; for beta-elimination activity) is an active-site residue. Residues H91, R110, and R152 each contribute to the DNA site. The FPG-type zinc finger occupies 233-267; it reads DVYGRGHGTCTSCGGALEAVRLGNRSTVFCPRCQQ. R257 acts as the Proton donor; for delta-elimination activity in catalysis.

It belongs to the FPG family. Monomer. The cofactor is Zn(2+).

It carries out the reaction Hydrolysis of DNA containing ring-opened 7-methylguanine residues, releasing 2,6-diamino-4-hydroxy-5-(N-methyl)formamidopyrimidine.. The catalysed reaction is 2'-deoxyribonucleotide-(2'-deoxyribose 5'-phosphate)-2'-deoxyribonucleotide-DNA = a 3'-end 2'-deoxyribonucleotide-(2,3-dehydro-2,3-deoxyribose 5'-phosphate)-DNA + a 5'-end 5'-phospho-2'-deoxyribonucleoside-DNA + H(+). Functionally, involved in base excision repair of DNA damaged by oxidation or by mutagenic agents. Acts as a DNA glycosylase that recognizes and removes damaged bases. Has a preference for oxidized purines, such as 7,8-dihydro-8-oxoguanine (8-oxoG). Has AP (apurinic/apyrimidinic) lyase activity and introduces nicks in the DNA strand. Cleaves the DNA backbone by beta-delta elimination to generate a single-strand break at the site of the removed base with both 3'- and 5'-phosphates. This chain is Formamidopyrimidine-DNA glycosylase, found in Pelobacter propionicus (strain DSM 2379 / NBRC 103807 / OttBd1).